A 168-amino-acid chain; its full sequence is Disulfide bond formation protein B 2 (168 aa).

Over 1 to 9 the chain is Cytoplasmic; the sequence is MSLACLRSF. A helical transmembrane segment spans residues 10–26; it reads FLPALLASTAVLVASFH. The Periplasmic segment spans residues 27-44; sequence LESVVGLVPCALCFSQRL. A disulfide bridge links Cys-36 with Cys-39. The helical transmembrane segment at 45-61 threads the bilayer; sequence MLGVYALVCLAALVHSP. Over 62-67 the chain is Cytoplasmic; it reads AARGRR. The helical transmembrane segment at 68–85 threads the bilayer; the sequence is AYAGLALASAFGGALLAG. At 86–140 the chain is on the periplasmic side; the sequence is RHVWLQGDPQVVDGCHLPVEQVLQRPLGEILQMFLLGSPDCVSISWSFLDLTLPE. A disulfide bond links Cys-100 and Cys-126. The helical transmembrane segment at 141–159 threads the bilayer; sequence WSLLAFLLLAAMPLSWLVA. At 160–168 the chain is on the cytoplasmic side; sequence YRFRKRAMA.

Belongs to the DsbB family.

It localises to the cell inner membrane. Functionally, required for disulfide bond formation in some periplasmic proteins. Acts by oxidizing the DsbA protein. The chain is Disulfide bond formation protein B 2 from Pseudomonas entomophila (strain L48).